The chain runs to 407 residues: 12S rRNA N(4)-cytidine methyltransferase METTL15 (407 aa).

S-adenosyl-L-methionine-binding positions include 100–102 (GGH), Asp-119, Phe-146, Asp-169, and Gln-176. A Phosphoserine modification is found at Ser-358.

It belongs to the methyltransferase superfamily. RsmH family.

Its subcellular location is the mitochondrion matrix. It catalyses the reaction cytidine(839) in 12S rRNA + S-adenosyl-L-methionine = N(4)-methylcytidine(839) in 12S rRNA + S-adenosyl-L-homocysteine + H(+). N4-methylcytidine (m4C) methyltransferase responsible for the methylation of position C839 in mitochondrial 12S rRNA. Involved in the stabilization of 12S rRNA folding, therefore facilitating the assembly of the mitochondrial small ribosomal subunits. In Pongo abelii (Sumatran orangutan), this protein is 12S rRNA N(4)-cytidine methyltransferase METTL15 (METTL15).